The sequence spans 221 residues: Eukaryotic translation initiation factor 4E-2 (221 aa).

The span at 1–20 (MADELNKAALEEYKSSSVED) shows a compositional bias: basic and acidic residues. Residues 1 to 36 (MADELNKAALEEYKSSSVEDRGEEGEIVGESDDTAS) form a disordered region. Residues 21–33 (RGEEGEIVGESDD) show a composition bias toward acidic residues. EIF4G-binding stretches follow at residues 46 to 49 (HPLE) and 56 to 92 (FDNPSGKSKQAAWGSSIRPIYTFSTAEDFWSVYNNIH). MRNA is bound by residues 64–69 (KQAAWG), lysine 96, and 114–115 (WE). Cysteine 119 and cysteine 157 are disulfide-bonded. The interval 140–149 (YTLLALIGEQ) is EIF4G-binding. Residues 164–169 (RVRQEK) and 209–213 (KKLDR) each bind mRNA.

This sequence belongs to the eukaryotic initiation factor 4E family. As to quaternary structure, EIF4F is a multi-subunit complex, the composition of which varies with external and internal environmental conditions. It is composed of at least EIF4A, EIF4E and EIF4G. EIF4E is also known to interact with other partners. In higher plants two isoforms of EIF4F have been identified, named isoform EIF4F and isoform EIF(iso)4F. Isoform EIF4F has subunits p220 and p26, whereas isoform EIF(iso)4F has subunits p82 and p28. In terms of assembly, (Microbial infection) Interacts with potyvirus viral genome-linked protein (VPg) in the nucleus; mostly potato virus Y (PVY-LYE84) and tobacco etch virus (TEV-HAT) VPg, but not with PVY-LYE90 and pepper mottle virus (PepMoV) VPg; these interactions are possible in susceptible hosts but impaired in resistant plants. Post-translationally, according to the redox status, the Cys-119-Cys-157 disulfide bridge may have a role in regulating protein function by affecting its ability to bind capped mRNA.

It localises to the nucleus. Its subcellular location is the cytoplasm. Component of the protein complex eIF4F, which is involved in the recognition of the mRNA cap, ATP-dependent unwinding of 5'-terminal secondary structure and recruitment of mRNA to the ribosome. Recognizes and binds the 7-methylguanosine-containing mRNA cap during an early step in the initiation of protein synthesis and facilitates ribosome binding by inducing the unwinding of the mRNAs secondary structures. Key component of recessive resistance to potyviruses. In terms of biological role, (Microbial infection) Susceptibility host factor required for viral infection (e.g. potato virus Y (PVY) and tobacco etch virus (TEV)) by recruiting viral RNAs to the host ribosomal complex via an interaction with viral genome-linked protein (VPg). The protein is Eukaryotic translation initiation factor 4E-2 of Solanum lycopersicum (Tomato).